A 530-amino-acid chain; its full sequence is UDP-glucuronosyltransferase 2B17 (530 aa).

The signal sequence occupies residues 1 to 23; the sequence is MPGKWISALLLLQISCCFRSVKC. 2 N-linked (GlcNAc...) asparagine glycosylation sites follow: N316 and N483. A helical transmembrane segment spans residues 494-510; the sequence is VIGFLLSCVATTIVLSV.

It belongs to the UDP-glycosyltransferase family.

Its subcellular location is the endoplasmic reticulum membrane. It catalyses the reaction glucuronate acceptor + UDP-alpha-D-glucuronate = acceptor beta-D-glucuronoside + UDP + H(+). The enzyme catalyses 17alpha-estradiol + UDP-alpha-D-glucuronate = 17alpha-estradiol 3-O-(beta-D-glucuronate) + UDP + H(+). The catalysed reaction is 17alpha-estradiol + UDP-alpha-D-glucuronate = 17alpha-estradiol 17-O-(beta-D-glucuronate) + UDP + H(+). It carries out the reaction 17beta-estradiol + UDP-alpha-D-glucuronate = 17beta-estradiol 17-O-(beta-D-glucuronate) + UDP + H(+). It catalyses the reaction 17beta-hydroxy-5alpha-androstan-3-one + UDP-alpha-D-glucuronate = 5alpha-dihydrotestosterone 17-O-(beta-D-glucuronate) + UDP + H(+). The enzyme catalyses testosterone + UDP-alpha-D-glucuronate = testosterone 17-O-(beta-D-glucuronate) + UDP + H(+). UDP-glucuronosyltransferase (UGT) that catalyzes phase II biotransformation reactions in which lipophilic substrates are conjugated with glucuronic acid to increase the metabolite's water solubility, thereby facilitating excretion into either the urine or bile. Catalyzes the glucuronidation of endogenous steroid hormones such as androgens (epitestosterone, androsterone) and estrogens (estradiol, epiestradiol). The polypeptide is UDP-glucuronosyltransferase 2B17 (Mus musculus (Mouse)).